The following is a 273-amino-acid chain: Glutamate racemase (273 aa).

Substrate-binding positions include 7–8 (DS) and 39–40 (YG). Cys70 (proton donor/acceptor) is an active-site residue. A substrate-binding site is contributed by 71 to 72 (NT). The active-site Proton donor/acceptor is Cys194. Residue 195-196 (TH) coordinates substrate.

Belongs to the aspartate/glutamate racemases family.

The enzyme catalyses L-glutamate = D-glutamate. The protein operates within cell wall biogenesis; peptidoglycan biosynthesis. Provides the (R)-glutamate required for cell wall biosynthesis. The chain is Glutamate racemase from Dinoroseobacter shibae (strain DSM 16493 / NCIMB 14021 / DFL 12).